A 449-amino-acid chain; its full sequence is Glucose-6-phosphate isomerase (449 aa).

Glu291 (proton donor) is an active-site residue. Active-site residues include His312 and Lys426.

It belongs to the GPI family.

The protein resides in the cytoplasm. It catalyses the reaction alpha-D-glucose 6-phosphate = beta-D-fructose 6-phosphate. Its pathway is carbohydrate biosynthesis; gluconeogenesis. It participates in carbohydrate degradation; glycolysis; D-glyceraldehyde 3-phosphate and glycerone phosphate from D-glucose: step 2/4. In terms of biological role, catalyzes the reversible isomerization of glucose-6-phosphate to fructose-6-phosphate. The polypeptide is Glucose-6-phosphate isomerase (Streptococcus agalactiae serotype Ia (strain ATCC 27591 / A909 / CDC SS700)).